We begin with the raw amino-acid sequence, 262 residues long: Small ribosomal subunit protein uS2 (262 aa).

It belongs to the universal ribosomal protein uS2 family.

In Borreliella afzelii (strain PKo) (Borrelia afzelii), this protein is Small ribosomal subunit protein uS2.